The sequence spans 238 residues: Purine nucleoside phosphorylase DeoD-type (238 aa).

His-5 contacts a purine D-ribonucleoside. Phosphate contacts are provided by residues Gly-21, Arg-25, Arg-44, and 88–91; that span reads RVGS. Residues 180-182 and 204-205 contribute to the a purine D-ribonucleoside site; these read EME and SD. Residue Asp-205 is the Proton donor of the active site.

Belongs to the PNP/UDP phosphorylase family. As to quaternary structure, homohexamer; trimer of homodimers.

It catalyses the reaction a purine D-ribonucleoside + phosphate = a purine nucleobase + alpha-D-ribose 1-phosphate. The catalysed reaction is a purine 2'-deoxy-D-ribonucleoside + phosphate = a purine nucleobase + 2-deoxy-alpha-D-ribose 1-phosphate. In terms of biological role, catalyzes the reversible phosphorolytic breakdown of the N-glycosidic bond in the beta-(deoxy)ribonucleoside molecules, with the formation of the corresponding free purine bases and pentose-1-phosphate. The chain is Purine nucleoside phosphorylase DeoD-type from Proteus mirabilis (strain HI4320).